The sequence spans 347 residues: Histidinol-phosphate aminotransferase (347 aa).

Position 209 is an N6-(pyridoxal phosphate)lysine (K209).

The protein belongs to the class-II pyridoxal-phosphate-dependent aminotransferase family. Histidinol-phosphate aminotransferase subfamily. In terms of assembly, homodimer. The cofactor is pyridoxal 5'-phosphate.

The catalysed reaction is L-histidinol phosphate + 2-oxoglutarate = 3-(imidazol-4-yl)-2-oxopropyl phosphate + L-glutamate. Its pathway is amino-acid biosynthesis; L-histidine biosynthesis; L-histidine from 5-phospho-alpha-D-ribose 1-diphosphate: step 7/9. The chain is Histidinol-phosphate aminotransferase from Syntrophotalea carbinolica (strain DSM 2380 / NBRC 103641 / GraBd1) (Pelobacter carbinolicus).